The following is a 141-amino-acid chain: Large ribosomal subunit protein uL11 (141 aa).

This sequence belongs to the universal ribosomal protein uL11 family. In terms of assembly, part of the ribosomal stalk of the 50S ribosomal subunit. Interacts with L10 and the large rRNA to form the base of the stalk. L10 forms an elongated spine to which L12 dimers bind in a sequential fashion forming a multimeric L10(L12)X complex. In terms of processing, one or more lysine residues are methylated.

In terms of biological role, forms part of the ribosomal stalk which helps the ribosome interact with GTP-bound translation factors. In Kosmotoga olearia (strain ATCC BAA-1733 / DSM 21960 / TBF 19.5.1), this protein is Large ribosomal subunit protein uL11.